The primary structure comprises 412 residues: Argininosuccinate synthase (412 aa).

ATP contacts are provided by residues 10 to 18 (AYSGGLDTS) and Ala-36. 2 residues coordinate L-citrulline: Tyr-87 and Ser-92. An ATP-binding site is contributed by 115–123 (SHGATGKGN). 3 residues coordinate L-aspartate: Thr-119, Asn-123, and Asp-124. Asn-123 contributes to the L-citrulline binding site. L-citrulline is bound by residues Arg-127, Ser-180, Ser-189, Glu-270, and Tyr-282.

This sequence belongs to the argininosuccinate synthase family. In terms of assembly, homotetramer.

The enzyme catalyses L-citrulline + L-aspartate + ATP = 2-(N(omega)-L-arginino)succinate + AMP + diphosphate + H(+). It participates in amino-acid biosynthesis; L-arginine biosynthesis; L-arginine from L-ornithine and carbamoyl phosphate: step 2/3. It functions in the pathway nitrogen metabolism; urea cycle; (N(omega)-L-arginino)succinate from L-aspartate and L-citrulline: step 1/1. This Aedes aegypti (Yellowfever mosquito) protein is Argininosuccinate synthase.